We begin with the raw amino-acid sequence, 122 residues long: Small ribosomal subunit protein uS13 (122 aa).

Residues 95–122 (GLPVRGQRTKTNARTRKGPKKTIAGKKK) form a disordered region.

The protein belongs to the universal ribosomal protein uS13 family. Part of the 30S ribosomal subunit. Forms a loose heterodimer with protein S19. Forms two bridges to the 50S subunit in the 70S ribosome.

Located at the top of the head of the 30S subunit, it contacts several helices of the 16S rRNA. In the 70S ribosome it contacts the 23S rRNA (bridge B1a) and protein L5 of the 50S subunit (bridge B1b), connecting the 2 subunits; these bridges are implicated in subunit movement. Contacts the tRNAs in the A and P-sites. This is Small ribosomal subunit protein uS13 from Corynebacterium glutamicum (strain ATCC 13032 / DSM 20300 / JCM 1318 / BCRC 11384 / CCUG 27702 / LMG 3730 / NBRC 12168 / NCIMB 10025 / NRRL B-2784 / 534).